Here is a 124-residue protein sequence, read N- to C-terminus: Small ribosomal subunit protein uS12 (124 aa).

Asp-89 carries the post-translational modification 3-methylthioaspartic acid.

It belongs to the universal ribosomal protein uS12 family. As to quaternary structure, part of the 30S ribosomal subunit. Contacts proteins S8 and S17. May interact with IF1 in the 30S initiation complex.

Functionally, with S4 and S5 plays an important role in translational accuracy. Interacts with and stabilizes bases of the 16S rRNA that are involved in tRNA selection in the A site and with the mRNA backbone. Located at the interface of the 30S and 50S subunits, it traverses the body of the 30S subunit contacting proteins on the other side and probably holding the rRNA structure together. The combined cluster of proteins S8, S12 and S17 appears to hold together the shoulder and platform of the 30S subunit. The polypeptide is Small ribosomal subunit protein uS12 (Vibrio cholerae serotype O1 (strain ATCC 39315 / El Tor Inaba N16961)).